The chain runs to 722 residues: Zinc finger protein 600 (722 aa).

The C2H2-type 1; degenerate zinc-finger motif lies at 162-184 (FQCNESGKAFNCSSLLRKHQIPH). C2H2-type zinc fingers lie at residues 190–212 (YKCDVCGKLFNHKQYLTCHCRCH), 218–240 (YKCNECGKSFSQVSSLTCHRRLH), 246–268 (HKCNECGKIFGQNSALVIHKAIH), 274–296 (YKCNECDKAFNQQSNLARHRRIH), 302–324 (YKCEECDKVFSRKSTLESHKRIH), 330–352 (YKCKVCDTAFTWNSQLARHKRIH), 358–380 (YKCNECGKTFSHKSSLVCHHRLH), 386–408 (YKCKVCDKAFAWNSHLVRHTRIH), and 414–436 (YKCNECGKTFGQNSDLLIHKSIH). The segment at 442-464 (YKYEECEKVFSCGSTLETHKIIH) adopts a C2H2-type 11; degenerate zinc-finger fold. 9 consecutive C2H2-type zinc fingers follow at residues 470–492 (YKCKVCDKAFACHSYLAKHTRIH), 498–520 (YKCNECSKTFRLRSYLASHRRVH), 526–548 (YKCNECSKTFSQRSYLHCHRRLH), 554–576 (YKCNECGKTFSHKPSLVHHRRLH), 582–604 (YKCTVCDKAFVRNSYLARHTRIH), 610–632 (YKCNECGKAFNQQSQLSLHHRIH), 638–660 (YKCETCDKVFSRKSHLKRHRRIH), 666–688 (YKCKVCDKTFGSDSHLKQHTGLH), and 694–716 (YKCNECGKAFSKQSTLIHHQAVH).

This sequence belongs to the krueppel C2H2-type zinc-finger protein family.

It is found in the nucleus. Its function is as follows. May be involved in transcriptional regulation. In Homo sapiens (Human), this protein is Zinc finger protein 600 (ZNF600).